The chain runs to 253 residues: 5-oxoprolinase subunit A (253 aa).

The protein belongs to the LamB/PxpA family. In terms of assembly, forms a complex composed of PxpA, PxpB and PxpC.

It catalyses the reaction 5-oxo-L-proline + ATP + 2 H2O = L-glutamate + ADP + phosphate + H(+). In terms of biological role, catalyzes the cleavage of 5-oxoproline to form L-glutamate coupled to the hydrolysis of ATP to ADP and inorganic phosphate. The polypeptide is 5-oxoprolinase subunit A (Bacillus cereus (strain B4264)).